Consider the following 303-residue polypeptide: MATH domain and coiled-coil domain-containing protein At3g58250 (303 aa).

The region spanning 8–135 (KKKFSWVIKN…KGELKIVVEI (128 aa)) is the MATH domain. Positions 231 to 287 (KLDWLKKKLDQVTQKKEKEAAGETRMHEIGEELKDLKLKCSDLEAQLDKEKADVLAA) form a coiled coil.

This chain is MATH domain and coiled-coil domain-containing protein At3g58250, found in Arabidopsis thaliana (Mouse-ear cress).